Consider the following 307-residue polypeptide: MPKISVIGAGNVGATLAQRLIEKDFADVVMLDVVEGIPQGKALDISQSANVLGFSHTITGSNDYAETAGSEIVVITAGIARKPGMTREELLAINQKIMTDVVSNCLKYSPEATLVVVSNPVDTMTYLAWKLSGLPRKRVVGLSGVLDGGRLATFVARELGVKPSAVTPCVMGEHGGSMVVMPRFTLVSGKPLSELVSAEKADELAKRAVNGGAEIVAFLKTGSAFYAPSASIAAMAEAIFTGSGKVMNCAAVLDGEYGLKNIVLGVPVKLGKGGLQEIITLPLDGTENARLLASAEVVKGQIAALSL.

NAD(+) contacts are provided by residues 8 to 13 (GAGNVG) and Asp-32. Substrate is bound by residues Arg-81 and Arg-87. NAD(+) contacts are provided by residues Asn-94 and 117-119 (VSN). Asn-119 and Arg-150 together coordinate substrate. The Proton acceptor role is filled by His-174.

It belongs to the LDH/MDH superfamily. MDH type 3 family.

The catalysed reaction is (S)-malate + NAD(+) = oxaloacetate + NADH + H(+). Its function is as follows. Catalyzes the reversible oxidation of malate to oxaloacetate. This chain is Malate dehydrogenase, found in Dehalococcoides mccartyi (strain ATCC BAA-2266 / KCTC 15142 / 195) (Dehalococcoides ethenogenes (strain 195)).